Consider the following 399-residue polypeptide: MAELLRSLQDSQLVARFQRRCGLFPAPDEGPRENGADPTERAARVPGVEHLPAANGKGGEAPANGLRRAAAPEAYVQKYVVKNYFYYYLFQFSAALGQEVFYITFLPFTHWNIDPYLSRRLIIIWVLVMYIGQVAKDVLKWPRPSSPPVVKLEKRLIAEYGMPSTHAMAATAIAFTLLISTMDRYQYPFVLGLVMAVVFSTLVCLSRLYTGMHTVLDVLGGVLITALLIVLTYPAWTFIDCLDSASPLFPVCVIVVPFFLCYNYPVSDYYSPTRADTTTILAAGAGVTIGFWINHFFQLVSKPAESLPVIQNIPPLTTYMLVLGLTKFAVGIVLILLVRQLVQNLSLQVLYSWFKVVTRNKEARRRLEIEVPYKFVTYTSVGICATTFVPMLHRFLGLP.

Transmembrane regions (helical) follow at residues 88 to 108, 121 to 141, 160 to 180, and 185 to 205; these read YLFQ…FLPF, LIII…VLKW, YGMP…LLIS, and YQYP…LVCL. A phosphatase sequence motif I region spans residues 136–144; that stretch reads KDVLKWPRP. The interval 163–166 is phosphatase sequence motif II; the sequence is PSTH. H166 functions as the Proton donor in the catalytic mechanism. Residues 206–217 are phosphatase sequence motif III; it reads SRLYTGMHTVLD. The active-site Nucleophile is the H213. The next 5 helical transmembrane spans lie at 219-239, 247-267, 280-300, 318-338, and 371-391; these read LGGV…WTFI, PLFP…YPVS, ILAA…FQLV, TYML…ILLV, and VPYK…FVPM.

This sequence belongs to the type 2 lipid phosphate phosphatase family. Expressed strongly in kidney and heart, followed by brain, colon, small intestine and lung. Not detected in skeletal muscle, thymus, spleen, liver, placenta, and peripheral blood leukocytes.

Its subcellular location is the endoplasmic reticulum membrane. The catalysed reaction is sphinganine 1-phosphate + H2O = sphinganine + phosphate. The enzyme catalyses sphing-4-enine 1-phosphate + H2O = sphing-4-enine + phosphate. It catalyses the reaction (4R)-hydroxysphinganine 1-phosphate + H2O = (4R)-hydroxysphinganine + phosphate. In terms of biological role, has specific phosphohydrolase activity towards sphingoid base 1-phosphates. Has high phosphohydrolase activity against dihydrosphingosine-1-phosphate and sphingosine-1-phosphate (S1P) in vitro. Sphingosine-1-phosphate phosphatase activity is needed for efficient recycling of sphingosine into the sphingolipid synthesis pathway. May play a role in attenuating intracellular sphingosine 1-phosphate (S1P) signaling. May play a role in pro-inflammatory signaling. Plays a role in the regulation of pancreatic islet beta-cell endoplasmic reticulum stress and proliferation. This chain is Sphingosine-1-phosphate phosphatase 2, found in Homo sapiens (Human).